A 125-amino-acid chain; its full sequence is S-adenosylmethionine decarboxylase proenzyme (125 aa).

Ser63 (schiff-base intermediate with substrate; via pyruvic acid) is an active-site residue. Ser63 carries the pyruvic acid (Ser); by autocatalysis modification. Catalysis depends on His68, which acts as the Proton acceptor; for processing activity. Catalysis depends on Cys83, which acts as the Proton donor; for catalytic activity.

The protein belongs to the prokaryotic AdoMetDC family. Type 1 subfamily. In terms of assembly, heterotetramer of two alpha and two beta chains arranged as a dimer of alpha/beta heterodimers. Pyruvate serves as cofactor. In terms of processing, is synthesized initially as an inactive proenzyme. Formation of the active enzyme involves a self-maturation process in which the active site pyruvoyl group is generated from an internal serine residue via an autocatalytic post-translational modification. Two non-identical subunits are generated from the proenzyme in this reaction, and the pyruvate is formed at the N-terminus of the alpha chain, which is derived from the carboxyl end of the proenzyme. The post-translation cleavage follows an unusual pathway, termed non-hydrolytic serinolysis, in which the side chain hydroxyl group of the serine supplies its oxygen atom to form the C-terminus of the beta chain, while the remainder of the serine residue undergoes an oxidative deamination to produce ammonia and the pyruvoyl group blocking the N-terminus of the alpha chain.

It carries out the reaction S-adenosyl-L-methionine + H(+) = S-adenosyl 3-(methylsulfanyl)propylamine + CO2. It participates in amine and polyamine biosynthesis; S-adenosylmethioninamine biosynthesis; S-adenosylmethioninamine from S-adenosyl-L-methionine: step 1/1. Functionally, catalyzes the decarboxylation of S-adenosylmethionine to S-adenosylmethioninamine (dcAdoMet), the propylamine donor required for the synthesis of the polyamines spermine and spermidine from the diamine putrescine. The polypeptide is S-adenosylmethionine decarboxylase proenzyme (Moorella thermoacetica (strain ATCC 39073 / JCM 9320)).